The sequence spans 360 residues: Phospho-N-acetylmuramoyl-pentapeptide-transferase (360 aa).

A run of 10 helical transmembrane segments spans residues 26–46 (AILG…AMIR), 70–90 (GTPT…TLLW), 97–117 (FVWV…IDDY), 134–154 (FFWQ…TAQA), 168–188 (VAIQ…VGAS), 199–219 (GLAI…AYLS), 236–256 (VGDL…FLWF), 263–283 (VFMG…LAVV), 288–308 (IVLV…IMQV), and 338–358 (VIVR…ATLK).

Belongs to the glycosyltransferase 4 family. MraY subfamily. Requires Mg(2+) as cofactor.

It is found in the cell inner membrane. It carries out the reaction UDP-N-acetyl-alpha-D-muramoyl-L-alanyl-gamma-D-glutamyl-meso-2,6-diaminopimeloyl-D-alanyl-D-alanine + di-trans,octa-cis-undecaprenyl phosphate = di-trans,octa-cis-undecaprenyl diphospho-N-acetyl-alpha-D-muramoyl-L-alanyl-D-glutamyl-meso-2,6-diaminopimeloyl-D-alanyl-D-alanine + UMP. Its pathway is cell wall biogenesis; peptidoglycan biosynthesis. Functionally, catalyzes the initial step of the lipid cycle reactions in the biosynthesis of the cell wall peptidoglycan: transfers peptidoglycan precursor phospho-MurNAc-pentapeptide from UDP-MurNAc-pentapeptide onto the lipid carrier undecaprenyl phosphate, yielding undecaprenyl-pyrophosphoryl-MurNAc-pentapeptide, known as lipid I. The chain is Phospho-N-acetylmuramoyl-pentapeptide-transferase from Thioalkalivibrio sulfidiphilus (strain HL-EbGR7).